The following is a 75-amino-acid chain: Small ribosomal subunit protein bS18 (75 aa).

This sequence belongs to the bacterial ribosomal protein bS18 family. As to quaternary structure, part of the 30S ribosomal subunit. Forms a tight heterodimer with protein bS6.

In terms of biological role, binds as a heterodimer with protein bS6 to the central domain of the 16S rRNA, where it helps stabilize the platform of the 30S subunit. The sequence is that of Small ribosomal subunit protein bS18 from Wigglesworthia glossinidia brevipalpis.